We begin with the raw amino-acid sequence, 239 residues long: MSDINIKIGLAEMLKGGVIMDVVNAEQAEIAQQAGAVAVMALERVPADIRKDGGIARMSDPKLIKEIMSVVSIPVMAKARIGHFVEAQILESLGVDFIDESEVLTPADELNHIDKDSFKVPFVCGCTNLGEALRRIGEGAALIRTKGEAGTGNIVEAVRQLRQVNKDINYIKNADKSELMAIAKNLQAPYDLVTYVHKNGKLPVPNFSAGGVATPADAALMMQLGAESVFVGSGIFKSA.

Residue D21 coordinates D-ribose 5-phosphate. The Schiff-base intermediate with D-ribose 5-phosphate role is filled by K78. Residue G150 coordinates D-ribose 5-phosphate. R162 contributes to the D-glyceraldehyde 3-phosphate binding site. Residues G211 and 232–233 (GS) each bind D-ribose 5-phosphate.

This sequence belongs to the PdxS/SNZ family. In terms of assembly, in the presence of PdxT, forms a dodecamer of heterodimers.

It catalyses the reaction aldehydo-D-ribose 5-phosphate + D-glyceraldehyde 3-phosphate + L-glutamine = pyridoxal 5'-phosphate + L-glutamate + phosphate + 3 H2O + H(+). It functions in the pathway cofactor biosynthesis; pyridoxal 5'-phosphate biosynthesis. Catalyzes the formation of pyridoxal 5'-phosphate from ribose 5-phosphate (RBP), glyceraldehyde 3-phosphate (G3P) and ammonia. The ammonia is provided by the PdxT subunit. Can also use ribulose 5-phosphate and dihydroxyacetone phosphate as substrates, resulting from enzyme-catalyzed isomerization of RBP and G3P, respectively. This is Pyridoxal 5'-phosphate synthase subunit PdxS from Francisella tularensis.